Consider the following 207-residue polypeptide: Histidine biosynthesis bifunctional protein HisIE (207 aa).

The tract at residues 1 to 117 (MSLVTTINWE…GKQEQPALVF (117 aa)) is phosphoribosyl-AMP cyclohydrolase. Residues 118–207 (LHQLEQVLAN…TEKLQERHNK (90 aa)) are phosphoribosyl-ATP pyrophosphohydrolase.

This sequence in the N-terminal section; belongs to the PRA-CH family. It in the C-terminal section; belongs to the PRA-PH family.

The protein localises to the cytoplasm. The enzyme catalyses 1-(5-phospho-beta-D-ribosyl)-ATP + H2O = 1-(5-phospho-beta-D-ribosyl)-5'-AMP + diphosphate + H(+). It catalyses the reaction 1-(5-phospho-beta-D-ribosyl)-5'-AMP + H2O = 1-(5-phospho-beta-D-ribosyl)-5-[(5-phospho-beta-D-ribosylamino)methylideneamino]imidazole-4-carboxamide. Its pathway is amino-acid biosynthesis; L-histidine biosynthesis; L-histidine from 5-phospho-alpha-D-ribose 1-diphosphate: step 2/9. The protein operates within amino-acid biosynthesis; L-histidine biosynthesis; L-histidine from 5-phospho-alpha-D-ribose 1-diphosphate: step 3/9. The polypeptide is Histidine biosynthesis bifunctional protein HisIE (Photobacterium profundum (strain SS9)).